We begin with the raw amino-acid sequence, 354 residues long: Guanine nucleotide-binding protein G(i) subunit alpha-3 (354 aa).

Gly-2 is lipidated: N-myristoyl glycine. Cys-3 carries the S-palmitoyl cysteine lipid modification. The G-alpha domain maps to 32-354 (KEVKLLLLGA…KNNLKECGLY (323 aa)). The interval 35-48 (KLLLLGAGESGKST) is G1 motif. The GTP site is built by Gly-42, Glu-43, Ser-44, Gly-45, Lys-46, Ser-47, Thr-48, Asp-150, Ser-151, Leu-175, Arg-176, Thr-177, Arg-178, Val-179, Lys-180, Thr-181, Val-201, Gly-203, Asn-269, Lys-270, Asp-272, Leu-273, Cys-325, Ala-326, and Thr-327. Ser-47 contributes to the Mg(2+) binding site. Residues 173 to 181 (DVLRTRVKT) are G2 motif. Thr-181 serves as a coordination point for Mg(2+). The interval 196–205 (FKMFDVGGQR) is G3 motif. Positions 265–272 (ILFLNKKD) are G4 motif. Residues 324–329 (TCATDT) form a G5 motif region.

This sequence belongs to the G-alpha family. G(i/o/t/z) subfamily. Heterotrimeric G proteins are composed of 3 units; alpha, beta and gamma. The alpha subunit contains the guanine nucleotide binding site. GTP binding causes dissociation of the heterotrimer, liberating the individual subunits so that they can interact with downstream effector proteins. Forms a complex with CCDC88A/GIV and EGFR which leads to enhanced EGFR signaling and triggering of cell migration; ligand stimulation is required for recruitment of GNAI3 to the complex. Interacts (inactive GDP-bound form) with CCDC88A/GIV (via GBA motif); the interaction leads to activation of GNAI3. Interacts (inactive GDP-bound form) with CCDC88C/DAPLE (via GBA motif); the interaction leads to activation of GNAI3. Interacts (inactive GDP-bound form) with NUCB1 (via GBA motif) and NUCB2 (via GBA motif); the interaction leads to activation of GNAI3. Interacts (inactive GDP-bound form) with PLCD4 (via GBA motif); the interaction leads to activation of GNAI3. Interacts with INSR; the interaction is probably mediated by CCDC88A/GIV. Interacts with GPSM1. Interacts (GDP-bound form) with GPSM2 (via GoLoco domains). Does not interact with RGS2. Interacts with RGS8 and RGS10; this strongly enhances the intrinsic GTPase activity. Interacts with RGS16; this strongly enhances the intrinsic GTPase activity. Interacts with RGS12. Interacts (via active GTP- or inactive GDP-bound form) with RGS14. Interacts (via active GTP-bound form) with TRPC5 (via ANK repeats) in a homotetrameric ion channel; the interaction is direct and activates the channel activity. Ubiquitously expressed.

Its subcellular location is the cytoplasm. The protein localises to the cell membrane. It is found in the cytoskeleton. The protein resides in the microtubule organizing center. It localises to the centrosome. Heterotrimeric guanine nucleotide-binding proteins (G proteins) function as transducers downstream of G protein-coupled receptors (GPCRs) in numerous signaling cascades. The alpha chain contains the guanine nucleotide binding site and alternates between an active, GTP-bound state and an inactive, GDP-bound state. Signaling by an activated GPCR promotes GDP release and GTP binding. The alpha subunit has a low GTPase activity that converts bound GTP to GDP, thereby terminating the signal. Both GDP release and GTP hydrolysis are modulated by numerous regulatory proteins. Signaling is mediated via effector proteins, such as adenylate cyclase. Inhibits adenylate cyclase activity, leading to decreased intracellular cAMP levels. Stimulates the activity of receptor-regulated K(+) channels. The active GTP-bound form prevents the association of RGS14 with centrosomes and is required for the translocation of RGS14 from the cytoplasm to the plasma membrane. May play a role in cell division. The active GTP-bound form activates the calcium permeant TRPC5 ion channels. This Cavia porcellus (Guinea pig) protein is Guanine nucleotide-binding protein G(i) subunit alpha-3 (GNAI3).